Reading from the N-terminus, the 117-residue chain is Thioredoxin (117 aa).

In terms of domain architecture, Thioredoxin spans 2–116; that stretch reads AISLTEEDFV…FENIIKDFFG (115 aa). Cysteine 40 and cysteine 43 are disulfide-bonded.

It belongs to the thioredoxin family.

Functionally, participates in various redox reactions through the reversible oxidation of its active center dithiol to a disulfide and catalyzes dithiol-disulfide exchange reactions. The protein is Thioredoxin (trxA) of Borreliella burgdorferi (strain ATCC 35210 / DSM 4680 / CIP 102532 / B31) (Borrelia burgdorferi).